Here is a 423-residue protein sequence, read N- to C-terminus: SH2 domain-containing protein 5 (423 aa).

The PID domain occupies 28 to 146 (AQYVGLLPCG…LLCRSFQLAY (119 aa)). An SH2 domain is found at 296-392 (WAFAGISRPC…LDMGRLNPTY (97 aa)). The interval 394–423 (EQDCGPLGRPPRTLRPLSHAKSEAELQGLG) is disordered. Residues 398–410 (GPLGRPPRTLRPL) show a composition bias toward low complexity.

As to quaternary structure, interacts with BCR.

Its subcellular location is the postsynaptic density. May be involved in synaptic plasticity regulation through the control of Rac-GTP levels. The protein is SH2 domain-containing protein 5 of Pongo abelii (Sumatran orangutan).